The primary structure comprises 424 residues: CinA-like protein (424 aa).

It belongs to the CinA family.

In Nostoc sp. (strain PCC 7120 / SAG 25.82 / UTEX 2576), this protein is CinA-like protein.